The following is a 127-amino-acid chain: uncharacterized protein (127 aa).

This is an uncharacterized protein from Pasteurella multocida (strain Pm70).